Consider the following 544-residue polypeptide: Chaperonin GroEL (544 aa).

Residues 29–32, 86–90, Gly-413, 476–478, and Asp-492 contribute to the ATP site; these read TLGP, DGTTT, and NAA.

It belongs to the chaperonin (HSP60) family. In terms of assembly, forms a cylinder of 14 subunits composed of two heptameric rings stacked back-to-back. Interacts with the co-chaperonin GroES.

It is found in the cytoplasm. The catalysed reaction is ATP + H2O + a folded polypeptide = ADP + phosphate + an unfolded polypeptide.. Functionally, together with its co-chaperonin GroES, plays an essential role in assisting protein folding. The GroEL-GroES system forms a nano-cage that allows encapsulation of the non-native substrate proteins and provides a physical environment optimized to promote and accelerate protein folding. In Bacillus thuringiensis (strain Al Hakam), this protein is Chaperonin GroEL.